The primary structure comprises 1358 residues: Regulatory protein SIR4 (1358 aa).

The segment covering 1–15 has biased composition (polar residues); that stretch reads MPNDNKTPNRSSTPK. 7 disordered regions span residues 1 to 98, 252 to 277, 356 to 466, 498 to 544, 677 to 726, 752 to 787, and 913 to 970; these read MPND…PHSN, SLSVPKVSAGDSGISPEESKARSPGI, HDEK…PPEI, VQGE…ISNG, ASTE…EDEQ, VSDSDDSSSDNDSLTDLESLSSGESNEIKVTNDLDT, and HSQE…ENLS. A compositionally biased stretch (basic and acidic residues) spans 26-39; sequence KIPEREEKSNEVKT. 2 stretches are compositionally biased toward polar residues: residues 49–66 and 75–96; these read KSKNYSRPSTAIHTSPHQ and HKQLQQPKSSPLKKNNYNSFPH. Positions 373 to 388 are enriched in basic and acidic residues; sequence QKMKEDADLKRMEILK. The segment covering 428 to 437 has biased composition (polar residues); that stretch reads QENNYNSTSR. Positions 452 to 464 are enriched in basic and acidic residues; the sequence is KNGENKKIGKRPP. The span at 507–517 shows a compositional bias: polar residues; that stretch reads RNNTLNVTPSK. The residue at position 692 (Ser692) is a Phosphoserine. Residues 706–720 show a composition bias toward polar residues; sequence FPVSLSQPSKKSFAN. Positions 754-766 are enriched in acidic residues; that stretch reads DSDDSSSDNDSLT. The segment covering 777-787 has biased composition (basic and acidic residues); sequence NEIKVTNDLDT. The segment covering 916–932 has biased composition (polar residues); sequence EQNSSSAKPSQIPTVSS. Lys1128 participates in a covalent cross-link: Glycyl lysine isopeptide (Lys-Gly) (interchain with G-Cter in SUMO). The stretch at 1271-1347 forms a coiled coil; that stretch reads LSFVDIVLSK…DAKINKLMEK (77 aa).

As to quaternary structure, homodimer. Interacts with MPS3. Interacts with RIS1. Interacts with SIR1, SIR2 and SIR3. Interacts with YKU80. Interacts with UBP10. Interacts with RAP1 (via C-terminus).

It is found in the nucleus. Functionally, the proteins SIR1 through SIR4 are required for transcriptional repression of the silent mating type loci, HML and HMR. The proteins SIR2 through SIR4 repress mulitple loci by modulating chromatin structure. Involves the compaction of chromatin fiber into a more condensed form. This chain is Regulatory protein SIR4 (SIR4), found in Saccharomyces cerevisiae (strain ATCC 204508 / S288c) (Baker's yeast).